Consider the following 184-residue polypeptide: FMRFamide-like neuropeptides 3 (184 aa).

An N-terminal signal peptide occupies residues 1–23 (MISPNHLILLFCVNCAFLVASDA). Positions 24-25 (TP) are excised as a propeptide. Phenylalanine amide is present on phenylalanine 35. A propeptide spanning residues 39–73 (AIADEMTFEEDGYYPSNVMWKRSTVDSSEPVIRDQ) is cleaved from the precursor. Residues phenylalanine 82, phenylalanine 95, phenylalanine 111, and phenylalanine 126 each carry the phenylalanine amide modification. Residues 90–110 (FGTMRFGKRNPENDTPFGTMR) are disordered. A propeptide spanning residues 130–142 (EDGNAPFGTMKFG) is cleaved from the precursor. The interval 150–184 (LGTMRFGKRSADDSAPFGTMRFGKRNPLGTMRFGK) is disordered. Phenylalanine 155, phenylalanine 171, and phenylalanine 182 each carry phenylalanine amide.

Belongs to the FARP (FMRFamide related peptide) family. Each flp gene is expressed in a distinct set of neurons. Flp-3 is expressed in the IL1 and PQR neurons.

It is found in the secreted. FMRFamides and FMRFamide-like peptides are neuropeptides. SAEPFGTMRF-amide inhibits the activity of dissected pharyngeal myogenic muscle system. This is FMRFamide-like neuropeptides 3 from Caenorhabditis elegans.